The sequence spans 448 residues: Adenylosuccinate synthetase (448 aa).

GTP-binding positions include 22-28 (GDEGKGK) and 50-52 (GHT). Catalysis depends on aspartate 23, which acts as the Proton acceptor. Mg(2+)-binding residues include aspartate 23 and glycine 50. Residues 23–26 (DEGK), 48–51 (NAGH), threonine 139, arginine 153, glutamine 234, threonine 249, and arginine 321 each bind IMP. Histidine 51 serves as the catalytic Proton donor. 317-323 (SVTGRPR) contributes to the substrate binding site. GTP-binding positions include arginine 323, 349–351 (KLD), and 431–433 (STG).

It belongs to the adenylosuccinate synthetase family. In terms of assembly, homodimer. Mg(2+) is required as a cofactor.

The protein resides in the cytoplasm. The enzyme catalyses IMP + L-aspartate + GTP = N(6)-(1,2-dicarboxyethyl)-AMP + GDP + phosphate + 2 H(+). Its pathway is purine metabolism; AMP biosynthesis via de novo pathway; AMP from IMP: step 1/2. Its function is as follows. Plays an important role in the de novo pathway of purine nucleotide biosynthesis. Catalyzes the first committed step in the biosynthesis of AMP from IMP. This is Adenylosuccinate synthetase from Burkholderia pseudomallei (strain 1106a).